A 242-amino-acid chain; its full sequence is Probable ABC transporter ATP-binding protein PEB1C (242 aa).

Positions 2 to 236 (IELKNVNKYY…PKTERARLFL (235 aa)) constitute an ABC transporter domain. 34-41 (GPSGSGKS) contributes to the ATP binding site.

Belongs to the ABC transporter superfamily.

Its subcellular location is the cell inner membrane. Most probably involved, with PEB1, in a binding-protein-dependent transport system for an amino acid. Probably responsible for energy coupling to the transport system. The polypeptide is Probable ABC transporter ATP-binding protein PEB1C (peb1C) (Campylobacter jejuni subsp. jejuni serotype O:2 (strain ATCC 700819 / NCTC 11168)).